A 292-amino-acid polypeptide reads, in one-letter code: MATVVTIRQLLESGVHFGHQTRRWNPKMKRFIFTERNGIYIIDLQKSLSYIDRAYEFVKETVAHGGTILFVGTKKQAQEAIYEQARRVGMPYVNQRWLGGMLTNFSTVHKRLQRLKELEEIDFDDVASSGLTKKELLGLRREKEKLERTLGGIRDMNRVPSAVWIVDTKKEHIAISEARKLNIPVVAILDTNCDPDEVDYPIPGNDDAIRSVSLLTRVVADAVAEGLMIRSGGAPGSEKGAGEPLAEWERELLEGKTEAAGEEATPAAEAPAKEEKAQAPEEKKEAGSGEEA.

The tract at residues 230-292 (RSGGAPGSEK…KKEAGSGEEA (63 aa)) is disordered. 2 stretches are compositionally biased toward basic and acidic residues: residues 247 to 259 (EWER…KTEA) and 271 to 292 (PAKE…GEEA).

The protein belongs to the universal ribosomal protein uS2 family.

The polypeptide is Small ribosomal subunit protein uS2 (Thermobifida fusca (strain YX)).